Reading from the N-terminus, the 554-residue chain is Carboxypeptidase Y homolog A (554 aa).

An N-terminal signal peptide occupies residues 1-17 (MRISASTVLLGAASAAS). Residues 18-137 (AASFQNQAQH…QLDNFNLRVK (120 aa)) constitute a propeptide that is removed on maturation. 5 disulfide bridges follow: cysteine 191–cysteine 431, cysteine 325–cysteine 339, cysteine 349–cysteine 372, cysteine 356–cysteine 365, and cysteine 394–cysteine 401. Asparagine 222 is a glycosylation site (N-linked (GlcNAc...) asparagine). Serine 278 is a catalytic residue. Residue aspartate 470 is part of the active site. Asparagine 518 carries an N-linked (GlcNAc...) asparagine glycan. The active site involves histidine 529.

Belongs to the peptidase S10 family.

Its subcellular location is the vacuole. It carries out the reaction Release of a C-terminal amino acid with broad specificity.. In terms of biological role, vacuolar carboxypeptidase involved in degradation of small peptides. Digests preferentially peptides containing an aliphatic or hydrophobic residue in P1' position, as well as methionine, leucine or phenylalanine in P1 position of ester substrate. The polypeptide is Carboxypeptidase Y homolog A (cpyA) (Neurospora crassa (strain ATCC 24698 / 74-OR23-1A / CBS 708.71 / DSM 1257 / FGSC 987)).